Reading from the N-terminus, the 632-residue chain is PAN2-PAN3 deadenylation complex subunit PAN3 (632 aa).

2 disordered regions span residues 1–22 (MQPGEGYHYDSGPNNAVHPHQL) and 99–127 (PTFGPGQHMNHRASHHHQSPQMAQQPPTL). Over residues 107–116 (MNHRASHHHQ) the composition is skewed to basic residues. A compositionally biased stretch (polar residues) spans 117–127 (SPQMAQQPPTL). The interval 223–494 (KADSAIIGDI…TINEIMPMIG (272 aa)) is pseudokinase domain. Residues R270, 321-328 (DYYPLAGT), and 397-398 (NK) contribute to the ATP site. Positions 495-533 (GRFFTVMENMQAKTDVLEAELSREMENGRLFRLVAKMNT) form a coiled coil. The knob domain stretch occupies residues 534 to 632 (VLERVEHGTD…LLGTNMMLHR (99 aa)).

It belongs to the protein kinase superfamily. PAN3 family. Homodimer. Forms a heterotrimer with a catalytic subunit PAN2 to form the poly(A)-nuclease (PAN) deadenylation complex. Interacts (via PAM-2 motif) with poly(A)-binding protein (via PABC domain), conferring substrate specificity of the enzyme complex. Interacts with the GW182 family protein ain-1. In terms of tissue distribution, highly expressed in germ cells.

It is found in the cytoplasm. The protein resides in the P-body. Its function is as follows. Regulatory subunit of the poly(A)-nuclease (PAN) deadenylation complex, one of two cytoplasmic mRNA deadenylases involved in general and miRNA-mediated mRNA turnover. PAN specifically shortens poly(A) tails of RNA and the activity is stimulated by poly(A)-binding protein (PABP). PAN deadenylation is followed by rapid degradation of the shortened mRNA tails by the CCR4-NOT complex. Deadenylated mRNAs are then degraded by two alternative mechanisms, namely exosome-mediated 3'-5' exonucleolytic degradation, or deadenylation-dependent mRNA decaping and subsequent 5'-3' exonucleolytic degradation by XRN1. PAN3 acts as a positive regulator for PAN activity, recruiting the catalytic subunit PAN2 to mRNA via its interaction with RNA and PABP, and to miRNA targets via its interaction with GW182 family proteins. Within the PAN complex, may positively regulate fertility. This Caenorhabditis elegans protein is PAN2-PAN3 deadenylation complex subunit PAN3.